Reading from the N-terminus, the 106-residue chain is MRTLLLYVVTAVAEIVGCYLPWRWLKEGGSVWLLLPGALSLALFAWLLTFHGTAAGRVYAAYGGVYVAVAILWLWCVDHVRPSAWDLAGVALTLAGMSIIAFQPRL.

Helical transmembrane passes span 4–24, 30–50, 58–78, and 82–102; these read LLLYVVTAVAEIVGCYLPWRW, SVWLLLPGALSLALFAWLLTF, VYAAYGGVYVAVAILWLWCVD, and PSAWDLAGVALTLAGMSIIAF.

Belongs to the UPF0060 family.

The protein resides in the cell inner membrane. The protein is UPF0060 membrane protein Bphy_5052 of Paraburkholderia phymatum (strain DSM 17167 / CIP 108236 / LMG 21445 / STM815) (Burkholderia phymatum).